Here is a 249-residue protein sequence, read N- to C-terminus: Zinc finger protein mnm-2 (249 aa).

The tract at residues 20 to 65 (PKEELETEEEDEEEDEEEELSSSEVTSENDMETESASSSASSVGQP) is disordered. Positions 24 to 52 (LETEEEDEEEDEEEELSSSEVTSENDMET) are enriched in acidic residues. C2H2-type zinc fingers lie at residues 168 to 190 (YRCD…KRIH), 196 to 218 (FKCE…RLTH), and 224 to 246 (YVCG…MRTH).

As to expression, in larva and adult, expressed in the M3 pharyngeal motor neurons, extrapharyngeal neurons in the head, the PQR tail neurons, rectal cells, vulva cells, the spermetheca-uterine valve, body wall muscle cells and neurons of the ventral nerve cord. In the embryo, expressed in pharyngeal cells, extrapharyngeal head neurons and within the tail. Expressed in body wall muscle cells during late embryonic stages. Expressed in the mother cells of the M2 and M3 pharyngeal motor neurons precursor cells at the embryonic bean stage and subsequently in the M2 and M3 cells as they are born. Expression is sustained only in the two M3 cells up to at least the 5-day-old adult. In contrast, expression gradually declines in the M2 cells beginning from the time of their birth, and is completely undetectable by the time of hatching.

The protein localises to the nucleus. Required in the M3 pharyngeal motor neuron to guide the growth cone of the sister M2 motor neuron during axon development. The polypeptide is Zinc finger protein mnm-2 (Caenorhabditis elegans).